The following is a 308-amino-acid chain: MLPPYFLFKEMTDTHYIGRFAPSPSGELHFGSLIAALGSYLQARARQGRWLVRIEDIDPPREVPGAAETILRQLEHYGLYWDGDVLWQSQRHHAYREALAWLHEQGLSYYCTCTRARIQSIGGIYDGHCRDLHHGPDNAAVRIRQQHPVTQFTDLLRGIIHADEKLAREDFIIHRRDGLFAYNLAVVVDDHFQGVSEIVRGADLIEPTVRQISLYQLFGWKVPDYIHLPLALNPQGAKLSKQNHAPALPKGDPRPVLIAALHFLGQQVETHWQDFSVEQILQSAVKNWTLTAVPESAIVNSTFSNASC.

L-glutamate is bound by residues 19-23 (RFAPS) and Glu55. Residues 22–32 (PSPSGELHFGS) carry the 'HIGH' region motif. The Zn(2+) site is built by Cys111, Cys113, Tyr125, and Cys129. 2 residues coordinate L-glutamate: Tyr182 and Arg200. Residues 238-242 (KLSKQ) carry the 'KMSKS' region motif. Lys241 is a binding site for ATP.

The protein belongs to the class-I aminoacyl-tRNA synthetase family. GluQ subfamily. Zn(2+) is required as a cofactor.

In terms of biological role, catalyzes the tRNA-independent activation of glutamate in presence of ATP and the subsequent transfer of glutamate onto a tRNA(Asp). Glutamate is transferred on the 2-amino-5-(4,5-dihydroxy-2-cyclopenten-1-yl) moiety of the queuosine in the wobble position of the QUC anticodon. The polypeptide is Glutamyl-Q tRNA(Asp) synthetase (Escherichia coli O6:H1 (strain CFT073 / ATCC 700928 / UPEC)).